Here is a 235-residue protein sequence, read N- to C-terminus: Large ribosomal subunit protein uL1c (235 aa).

Belongs to the universal ribosomal protein uL1 family. Part of the 50S ribosomal subunit.

The protein resides in the plastid. It localises to the chloroplast. Binds directly to 23S rRNA. Might be involved in E site tRNA release (Potential). This chain is Large ribosomal subunit protein uL1c (rpl1), found in Gracilaria tenuistipitata var. liui (Red alga).